Here is a 103-residue protein sequence, read N- to C-terminus: Auxin-responsive protein SAUR50 (103 aa).

It belongs to the ARG7 family.

Functionally, effector of hormonal and environmental signals in plant growth. Involved in heliotropism. The protein is Auxin-responsive protein SAUR50 of Helianthus annuus (Common sunflower).